A 220-amino-acid chain; its full sequence is Cysteine-rich venom protein VAR5 (220 aa).

Residues 1 to 22 (MILLKLYLTLAAILCQSRGTTS) form the signal peptide. Positions 41-169 (NKHNDLRRTV…PLKYFLVCQY (129 aa)) constitute an SCP domain. 5 cysteine pairs are disulfide-bonded: C77–C156, C95–C170, C151–C167, C189–C196, and C192–C201. The ShKT domain occupies 205-220 (CEHSNQYINCPDLTKQ).

The protein belongs to the CRISP family. In terms of processing, contains 8 disulfide bonds. As to expression, expressed by the venom gland.

The protein localises to the secreted. Blocks ryanodine receptors, and potassium channels. This chain is Cysteine-rich venom protein VAR5, found in Varanus acanthurus (Ridge-tailed monitor).